Consider the following 362-residue polypeptide: Histidinol-phosphate aminotransferase (362 aa).

Lysine 219 carries the N6-(pyridoxal phosphate)lysine modification.

It belongs to the class-II pyridoxal-phosphate-dependent aminotransferase family. Histidinol-phosphate aminotransferase subfamily. As to quaternary structure, homodimer. Pyridoxal 5'-phosphate serves as cofactor.

It catalyses the reaction L-histidinol phosphate + 2-oxoglutarate = 3-(imidazol-4-yl)-2-oxopropyl phosphate + L-glutamate. It participates in amino-acid biosynthesis; L-histidine biosynthesis; L-histidine from 5-phospho-alpha-D-ribose 1-diphosphate: step 7/9. The polypeptide is Histidinol-phosphate aminotransferase (Maricaulis maris (strain MCS10) (Caulobacter maris)).